A 187-amino-acid polypeptide reads, in one-letter code: Adenylate kinase (187 aa).

10–15 (GSGKGT) is an ATP binding site. The interval 30-59 (STGDLLRSEVVAGTPLGLQAKQVMAQGDLV) is NMP. Residues T31, R36, 57 to 59 (DLV), 85 to 88 (GYPR), and Q92 contribute to the AMP site. The tract at residues 126 to 136 (GRAQAEGREDD) is LID. Residue R127 coordinates ATP. R133 and R144 together coordinate AMP. An ATP-binding site is contributed by G172.

Belongs to the adenylate kinase family. In terms of assembly, monomer.

Its subcellular location is the cytoplasm. It carries out the reaction AMP + ATP = 2 ADP. Its pathway is purine metabolism; AMP biosynthesis via salvage pathway; AMP from ADP: step 1/1. Functionally, catalyzes the reversible transfer of the terminal phosphate group between ATP and AMP. Plays an important role in cellular energy homeostasis and in adenine nucleotide metabolism. The protein is Adenylate kinase of Xylella fastidiosa (strain 9a5c).